The sequence spans 940 residues: Isoleucine--tRNA ligase (940 aa).

The short motif at 58 to 68 (PYANGSIHIGH) is the 'HIGH' region element. Residue Glu-563 coordinates L-isoleucyl-5'-AMP. The 'KMSKS' region signature appears at 604 to 608 (KMSKS). Position 607 (Lys-607) interacts with ATP. Cys-902, Cys-905, Cys-922, and Cys-925 together coordinate Zn(2+).

This sequence belongs to the class-I aminoacyl-tRNA synthetase family. IleS type 1 subfamily. In terms of assembly, monomer. Zn(2+) serves as cofactor.

It is found in the cytoplasm. The enzyme catalyses tRNA(Ile) + L-isoleucine + ATP = L-isoleucyl-tRNA(Ile) + AMP + diphosphate. Functionally, catalyzes the attachment of isoleucine to tRNA(Ile). As IleRS can inadvertently accommodate and process structurally similar amino acids such as valine, to avoid such errors it has two additional distinct tRNA(Ile)-dependent editing activities. One activity is designated as 'pretransfer' editing and involves the hydrolysis of activated Val-AMP. The other activity is designated 'posttransfer' editing and involves deacylation of mischarged Val-tRNA(Ile). The sequence is that of Isoleucine--tRNA ligase from Marinomonas sp. (strain MWYL1).